Reading from the N-terminus, the 455-residue chain is Bifunctional protein GlmU (455 aa).

The pyrophosphorylase stretch occupies residues Met-1 to Arg-227. UDP-N-acetyl-alpha-D-glucosamine contacts are provided by residues Leu-8–Gly-11, Lys-22, Gln-72, and Gly-77–Thr-78. Residue Asp-100 participates in Mg(2+) binding. The UDP-N-acetyl-alpha-D-glucosamine site is built by Gly-137, Glu-152, Asn-167, and Asn-225. Residue Asn-225 participates in Mg(2+) binding. The linker stretch occupies residues Glu-228 to Asn-248. The interval Gly-249 to Lys-455 is N-acetyltransferase. The UDP-N-acetyl-alpha-D-glucosamine site is built by Arg-330 and Lys-348. Catalysis depends on His-360, which acts as the Proton acceptor. 2 residues coordinate UDP-N-acetyl-alpha-D-glucosamine: Tyr-363 and Asn-374. Acetyl-CoA is bound by residues Asn-383–Tyr-384, Ser-402, Cys-420, and Arg-437.

The protein in the N-terminal section; belongs to the N-acetylglucosamine-1-phosphate uridyltransferase family. This sequence in the C-terminal section; belongs to the transferase hexapeptide repeat family. As to quaternary structure, homotrimer. Mg(2+) serves as cofactor.

Its subcellular location is the cytoplasm. The enzyme catalyses alpha-D-glucosamine 1-phosphate + acetyl-CoA = N-acetyl-alpha-D-glucosamine 1-phosphate + CoA + H(+). It carries out the reaction N-acetyl-alpha-D-glucosamine 1-phosphate + UTP + H(+) = UDP-N-acetyl-alpha-D-glucosamine + diphosphate. Its pathway is nucleotide-sugar biosynthesis; UDP-N-acetyl-alpha-D-glucosamine biosynthesis; N-acetyl-alpha-D-glucosamine 1-phosphate from alpha-D-glucosamine 6-phosphate (route II): step 2/2. The protein operates within nucleotide-sugar biosynthesis; UDP-N-acetyl-alpha-D-glucosamine biosynthesis; UDP-N-acetyl-alpha-D-glucosamine from N-acetyl-alpha-D-glucosamine 1-phosphate: step 1/1. It functions in the pathway bacterial outer membrane biogenesis; LPS lipid A biosynthesis. Its function is as follows. Catalyzes the last two sequential reactions in the de novo biosynthetic pathway for UDP-N-acetylglucosamine (UDP-GlcNAc). The C-terminal domain catalyzes the transfer of acetyl group from acetyl coenzyme A to glucosamine-1-phosphate (GlcN-1-P) to produce N-acetylglucosamine-1-phosphate (GlcNAc-1-P), which is converted into UDP-GlcNAc by the transfer of uridine 5-monophosphate (from uridine 5-triphosphate), a reaction catalyzed by the N-terminal domain. The polypeptide is Bifunctional protein GlmU (Alkaliphilus oremlandii (strain OhILAs) (Clostridium oremlandii (strain OhILAs))).